The primary structure comprises 228 residues: 6-carboxyhexanoate--CoA ligase (228 aa).

The protein belongs to the BioW family. Homodimer. The cofactor is Mg(2+).

The catalysed reaction is heptanedioate + ATP + CoA = 6-carboxyhexanoyl-CoA + AMP + diphosphate. Its pathway is metabolic intermediate metabolism; pimeloyl-CoA biosynthesis; pimeloyl-CoA from pimelate: step 1/1. Catalyzes the transformation of pimelate into pimeloyl-CoA with concomitant hydrolysis of ATP to AMP. This chain is 6-carboxyhexanoate--CoA ligase, found in Staphylococcus epidermidis (strain ATCC 12228 / FDA PCI 1200).